Here is a 465-residue protein sequence, read N- to C-terminus: Protein unc-93 homolog A (465 aa).

The next 5 membrane-spanning stretches (helical) occupy residues 8-28, 40-60, 71-91, 96-118, and 140-160; these read VLVV…LQSL, VISL…LPPI, IVVS…PGWA, TSAI…LTIS, and IFFF…SLIF. N-linked (GlcNAc...) asparagine glycosylation is found at N183 and N189. The helical transmembrane segment at 200 to 220 threads the bilayer; that stretch reads TLLGCYIGVGLLAIIFVAVFL. N237 is a glycosylation site (N-linked (GlcNAc...) asparagine). 5 consecutive transmembrane segments (helical) span residues 256–276, 281–301, 319–339, 343–363, and 410–427; these read LLLL…LSGE, YVTC…FAAS, IALF…LLYW, PDQL…DAVW, and IYIA…YLYV.

Belongs to the unc-93 family.

The protein resides in the membrane. In Danio rerio (Zebrafish), this protein is Protein unc-93 homolog A (unc93a).